The primary structure comprises 518 residues: Gypsy retrotransposon integrase-like protein 1 (518 aa).

Positions 130-292 constitute an Integrase catalytic domain; that stretch reads QQHLPMVGNP…TPYFQMFNRN (163 aa). At Ser-498 the chain carries Phosphoserine.

The sequence is that of Gypsy retrotransposon integrase-like protein 1 (Gin1) from Mus musculus (Mouse).